The chain runs to 140 residues: Phospholipase A2 (140 aa).

Positions 1–21 are cleaved as a signal peptide; sequence MNPAHLLVLAAVCISLSGASS. Positions 22–27 are excised as a propeptide; the sequence is IAPQPL. 7 disulfide bridges follow: Cys38–Cys97, Cys52–Cys139, Cys54–Cys70, Cys69–Cys125, Cys76–Cys118, Cys86–Cys111, and Cys104–Cys116. A glycan (N-linked (GlcNAc...) asparagine) is linked at Asn39. Ca(2+)-binding residues include Tyr53, Gly55, and Gly57. His73 is an active-site residue. A Ca(2+)-binding site is contributed by Asp74. Asn107 carries an N-linked (GlcNAc...) asparagine glycan. Asp119 is a catalytic residue.

It belongs to the phospholipase A2 family. Group I subfamily. D49 sub-subfamily. The cofactor is Ca(2+). In terms of tissue distribution, expressed by the venom gland.

Its subcellular location is the secreted. It carries out the reaction a 1,2-diacyl-sn-glycero-3-phosphocholine + H2O = a 1-acyl-sn-glycero-3-phosphocholine + a fatty acid + H(+). PLA2 catalyzes the calcium-dependent hydrolysis of the 2-acyl groups in 3-sn-phosphoglycerides. The polypeptide is Phospholipase A2 (Micrurus altirostris (Uruguayan coral snake)).